A 37-amino-acid chain; its full sequence is Large ribosomal subunit protein bL36 (37 aa).

The protein belongs to the bacterial ribosomal protein bL36 family.

This Staphylococcus carnosus (strain TM300) protein is Large ribosomal subunit protein bL36.